Consider the following 178-residue polypeptide: N-alpha-acetyltransferase 20 (178 aa).

The N-acetyltransferase domain maps to Thr-2–Ser-157.

The protein belongs to the acetyltransferase family. ARD1 subfamily. Component of the N-terminal acetyltransferase B (NatB) complex which is composed of NAA20 and NAA25.

It is found in the cytoplasm. Its subcellular location is the nucleus. The catalysed reaction is N-terminal L-methionyl-L-asparaginyl-[protein] + acetyl-CoA = N-terminal N(alpha)-acetyl-L-methionyl-L-asparaginyl-[protein] + CoA + H(+). It carries out the reaction N-terminal L-methionyl-L-glutaminyl-[protein] + acetyl-CoA = N-terminal N(alpha)-acetyl-L-methionyl-L-glutaminyl-[protein] + CoA + H(+). The enzyme catalyses N-terminal L-methionyl-L-aspartyl-[protein] + acetyl-CoA = N-terminal N(alpha)-acetyl-L-methionyl-L-aspartyl-[protein] + CoA + H(+). It catalyses the reaction N-terminal L-methionyl-L-glutamyl-[protein] + acetyl-CoA = N-terminal N(alpha)-acetyl-L-methionyl-L-glutamyl-[protein] + CoA + H(+). In terms of biological role, catalytic subunit of the NatB complex which catalyzes acetylation of the N-terminal methionine residues of peptides beginning with Met-Asp, Met-Glu, Met-Asn and Met-Gln. Proteins with cell cycle functions are overrepresented in the pool of NatB substrates. Required for maintaining the structure and function of actomyosin fibers and for proper cellular migration. This is N-alpha-acetyltransferase 20 (NAA20) from Homo sapiens (Human).